A 105-amino-acid chain; its full sequence is Nitrogenase-stabilizing/protective protein NifW (105 aa).

The protein belongs to the NifW family. Homotrimer; associates with NifD.

May protect the nitrogenase Fe-Mo protein from oxidative damage. This chain is Nitrogenase-stabilizing/protective protein NifW, found in Rhodospirillum centenum (strain ATCC 51521 / SW).